A 265-amino-acid chain; its full sequence is Shikimate dehydrogenase (NADP(+)) (265 aa).

Shikimate contacts are provided by residues Ser-15 to Ser-17 and Thr-62. Lys-66 (proton acceptor) is an active-site residue. NADP(+) is bound at residue Glu-78. Residues Asn-87 and Asp-102 each contribute to the shikimate site. NADP(+) contacts are provided by residues Gly-126–Val-130, Asn-150–Lys-155, and Val-210. Residue Tyr-212 participates in shikimate binding. An NADP(+)-binding site is contributed by Gly-233.

The protein belongs to the shikimate dehydrogenase family. In terms of assembly, homodimer.

The enzyme catalyses shikimate + NADP(+) = 3-dehydroshikimate + NADPH + H(+). Its pathway is metabolic intermediate biosynthesis; chorismate biosynthesis; chorismate from D-erythrose 4-phosphate and phosphoenolpyruvate: step 4/7. Involved in the biosynthesis of the chorismate, which leads to the biosynthesis of aromatic amino acids. Catalyzes the reversible NADPH linked reduction of 3-dehydroshikimate (DHSA) to yield shikimate (SA). The sequence is that of Shikimate dehydrogenase (NADP(+)) from Pelagibacter ubique (strain HTCC1062).